The primary structure comprises 902 residues: Respiratory burst oxidase homolog protein A (902 aa).

Residues 1–344 (MMNRSEMQKL…KYFLFDNWKR (344 aa)) lie on the Cytoplasmic side of the membrane. Disordered regions lie at residues 63–87 (KSPNHRGAGSNYEDQSLLRQGRSGR) and 107–130 (ASSVSSSSARKPPRPQLAKLRRSK). A compositionally biased stretch (polar residues) spans 74–87 (YEDQSLLRQGRSGR). Positions 107 to 116 (ASSVSSSSAR) are enriched in low complexity. EF-hand-like regions lie at residues 163–173 (TMTTNGLLHRS) and 198–209 (ENVSGDSININE). EF-hand domains lie at 221 to 256 (DFDSRLRTFFAMVDKDSDGRLNEAEVREIITLSASA) and 265 to 300 (QADEYAALIMEELDPYHYGYIMIENLEILLLQAPMQ). Ca(2+) is bound by residues aspartate 234, aspartate 236, aspartate 238, arginine 240, and glutamate 245. Serine 311 and serine 315 each carry phosphoserine. Residues 345–365 (VWVMALWIGAMAGLFTWKFME) traverse the membrane as a helical segment. Over 366-380 (YRKRSAYEVMGVCVC) the chain is Extracellular. The helical transmembrane segment at 381–401 (IAKGAAETLKLNMAMILLPVC) threads the bilayer. Residues 383–540 (KGAAETLKLN…LFVIVYSLLV (158 aa)) enclose the Ferric oxidoreductase domain. Residues 402–428 (RNTITWLRTKTKLSAIVPFDDSLNFHK) lie on the Cytoplasmic side of the membrane. The chain crosses the membrane as a helical span at residues 429-449 (VIAIGISVGVGIHATSHLACD). The Extracellular portion of the chain corresponds to 450 to 484 (FPRLIAADEDQYEPMEKYFGPQTKRYLDFVQSVEG). The helical transmembrane segment at 485 to 505 (VTGIGMVVLMTIAFTLATTWF) threads the bilayer. The Cytoplasmic segment spans residues 506–529 (RRNKLNLPGPLKKITGFNAFWYSH). Residues 530-550 (HLFVIVYSLLVVHGFYVYLII) form a helical membrane-spanning segment. Residues 551–709 (EPWYKKTTWM…PAQDYKKFEV (159 aa)) lie on the Extracellular side of the membrane. Positions 575-703 (IRAFRSSVEA…DGPYGAPAQD (129 aa)) constitute an FAD-binding FR-type domain. A helical transmembrane segment spans residues 710-730 (VLLVGLGIGATPMISIVSDII). Residues 731-902 (NNLKGVEEGS…TKFIFHKENF (172 aa)) are Cytoplasmic-facing. The tract at residues 738–760 (EGSNRRQSPIHNMVTPPVSPSRK) is disordered.

This sequence belongs to the RBOH (TC 5.B.1.3) family. In terms of assembly, monomer and homodimer.

It localises to the membrane. Calcium-dependent NADPH oxidase that generates superoxide. This chain is Respiratory burst oxidase homolog protein A (RBOHA), found in Arabidopsis thaliana (Mouse-ear cress).